We begin with the raw amino-acid sequence, 478 residues long: Leukotoxin secretion protein D (478 aa).

Residues 1 to 77 (MKIWLSGIYE…LAVAIVLASV (77 aa)) lie on the Cytoplasmic side of the membrane. The helical transmembrane segment at 78-98 (SKVEIVATAPGKLTFSGRSKE) threads the bilayer. The Periplasmic portion of the chain corresponds to 99–478 (IKPIENTIVQ…ESVTESLRER (380 aa)).

This sequence belongs to the membrane fusion protein (MFP) (TC 8.A.1) family.

It is found in the cell inner membrane. Its function is as follows. Involved in the transport of the Leukotoxin. This chain is Leukotoxin secretion protein D (lktD), found in Pasteurella haemolytica-like sp. (strain 5943B).